Consider the following 706-residue polypeptide: Glutamine-dependent NAD(+) synthetase (706 aa).

In terms of domain architecture, CN hydrolase spans 5–275 (VTVATCALNQ…VEVLTATLDL (271 aa)). The Proton acceptor; for glutaminase activity role is filled by Glu-45. Lys-114 acts as the For glutaminase activity in catalysis. The active-site Nucleophile; for glutaminase activity is Cys-175. Residues 325-706 (YHSPAEEISL…RQRQELDGVD (382 aa)) form a ligase region. Residue 355–362 (PLSGGVDS) coordinates ATP. Residue Ser-357 is part of the active site.

This sequence in the C-terminal section; belongs to the NAD synthetase family. Homohexamer.

The enzyme catalyses deamido-NAD(+) + L-glutamine + ATP + H2O = L-glutamate + AMP + diphosphate + NAD(+) + H(+). The protein operates within cofactor biosynthesis; NAD(+) biosynthesis; NAD(+) from deamido-NAD(+) (L-Gln route): step 1/1. Functionally, catalyzes the ATP-dependent amidation of deamido-NAD to form NAD. Uses L-glutamine as a nitrogen source. This chain is Glutamine-dependent NAD(+) synthetase (NADSYN1), found in Bos taurus (Bovine).